The chain runs to 126 residues: uncharacterized protein (126 aa).

The Cytoplasmic segment spans residues M1 to V28. Residues V29 to I49 traverse the membrane as a helical segment. Residues D50 to S75 lie on the Extracellular side of the membrane. A helical transmembrane segment spans residues V76–I96. G97 is a topological domain (cytoplasmic). Residues H98–A118 form a helical membrane-spanning segment. Over E119–T126 the chain is Extracellular.

It is found in the membrane. This is an uncharacterized protein from Saccharomyces cerevisiae (strain ATCC 204508 / S288c) (Baker's yeast).